The primary structure comprises 192 residues: Ribose 1,5-bisphosphate phosphokinase PhnN (192 aa).

It belongs to the ribose 1,5-bisphosphokinase family.

The catalysed reaction is alpha-D-ribose 1,5-bisphosphate + ATP = 5-phospho-alpha-D-ribose 1-diphosphate + ADP. The protein operates within metabolic intermediate biosynthesis; 5-phospho-alpha-D-ribose 1-diphosphate biosynthesis; 5-phospho-alpha-D-ribose 1-diphosphate from D-ribose 5-phosphate (route II): step 3/3. Its function is as follows. Catalyzes the phosphorylation of ribose 1,5-bisphosphate to 5-phospho-D-ribosyl alpha-1-diphosphate (PRPP). This chain is Ribose 1,5-bisphosphate phosphokinase PhnN, found in Achromobacter xylosoxidans (strain A8).